A 313-amino-acid polypeptide reads, in one-letter code: Fe-S cluster assembly protein DRE2 (313 aa).

The N-terminal SAM-like domain stretch occupies residues 1–184; sequence MTLRILLLLH…KKLLDRSNEV (184 aa). Over residues 134 to 144 the composition is skewed to low complexity; sequence NITSNSNNNDS. Disordered regions lie at residues 134-155, 187-254, and 271-313; these read NITSNSNNNDSSPREVGVNNTG, NLAS…QEDN, and NLII…RQSG. The interval 185-270 is linker; that stretch reads KGNLASGTVK…NDLISELKSD (86 aa). Polar residues predominate over residues 189–207; the sequence is ASGTVKSPSPGLTDTSAQN. Over residues 233 to 254 the composition is skewed to acidic residues; it reads SDSDNNEGRDLDDDDDDGQEDN.

It belongs to the anamorsin family. In terms of assembly, monomer. Interacts with TAH18. Interacts with MIA40.

The protein resides in the cytoplasm. It localises to the mitochondrion intermembrane space. Its function is as follows. Component of the cytosolic iron-sulfur (Fe-S) protein assembly (CIA) machinery required for the maturation of extramitochondrial Fe-S proteins. Part of an electron transfer chain functioning in an early step of cytosolic Fe-S biogenesis, facilitating the de novo assembly of a [4Fe-4S] cluster on the scaffold complex CFD1-NBP35. Electrons are transferred to DRE2 from NADPH via the FAD- and FMN-containing protein TAH18. TAH18-DRE2 are also required for the assembly of the diferric tyrosyl radical cofactor of ribonucleotide reductase (RNR), probably by providing electrons for reduction during radical cofactor maturation in the catalytic small subunit RNR2. In Lodderomyces elongisporus (strain ATCC 11503 / CBS 2605 / JCM 1781 / NBRC 1676 / NRRL YB-4239) (Yeast), this protein is Fe-S cluster assembly protein DRE2 (DRE2).